The following is a 453-amino-acid chain: Tol-Pal system protein TolB (453 aa).

An N-terminal signal peptide occupies residues 1-31 (MINNLSISMTKVIKIILAIIIILFNTLSIFA).

Belongs to the TolB family. The Tol-Pal system is composed of five core proteins: the inner membrane proteins TolA, TolQ and TolR, the periplasmic protein TolB and the outer membrane protein Pal. They form a network linking the inner and outer membranes and the peptidoglycan layer.

The protein resides in the periplasm. Its function is as follows. Part of the Tol-Pal system, which plays a role in outer membrane invagination during cell division and is important for maintaining outer membrane integrity. The sequence is that of Tol-Pal system protein TolB from Orientia tsutsugamushi (strain Ikeda) (Rickettsia tsutsugamushi).